The chain runs to 142 residues: Putative tyrosine phosphatase 123R (142 aa).

Residues 2-137 (EPTKIVENLY…LAQFERWLNS (136 aa)) enclose the Tyrosine-protein phosphatase domain. The active-site Phosphocysteine intermediate is the Cys81.

Belongs to the protein-tyrosine phosphatase family.

The chain is Putative tyrosine phosphatase 123R from Invertebrate iridescent virus 6 (IIV-6).